A 119-amino-acid chain; its full sequence is MDKIVLEGCRFYGYHGAYKEEQTLGQIFLVDLELSVDLQAASLSSQLTDTVHYGMVFDSVRQLVEGEKFILIDGLAGAICEQLFNEFPPIEAIKVAIKKENPPIAGHYKAVGIELERQR.

Substrate is bound by residues glutamate 21, tyrosine 53, and isoleucine 72–aspartate 73. Catalysis depends on lysine 99, which acts as the Proton donor/acceptor.

It belongs to the DHNA family.

The catalysed reaction is 7,8-dihydroneopterin = 6-hydroxymethyl-7,8-dihydropterin + glycolaldehyde. The protein operates within cofactor biosynthesis; tetrahydrofolate biosynthesis; 2-amino-4-hydroxy-6-hydroxymethyl-7,8-dihydropteridine diphosphate from 7,8-dihydroneopterin triphosphate: step 3/4. Its function is as follows. Catalyzes the conversion of 7,8-dihydroneopterin to 6-hydroxymethyl-7,8-dihydropterin. The protein is Dihydroneopterin aldolase (folB) of Streptococcus pyogenes.